A 390-amino-acid polypeptide reads, in one-letter code: Putative F-box protein At3g52320 (390 aa).

An F-box domain is found at 21 to 71 (VVFLPEIPEEMLIDILIRLPAKSLMRFKCVSKLWLSLITSRYFTNRFFKPS).

The polypeptide is Putative F-box protein At3g52320 (Arabidopsis thaliana (Mouse-ear cress)).